A 420-amino-acid polypeptide reads, in one-letter code: S-adenosylmethionine synthase (420 aa).

His-16 provides a ligand contact to ATP. A Mg(2+)-binding site is contributed by Asp-18. Glu-44 is a K(+) binding site. L-methionine is bound by residues Glu-57 and Gln-100. A flexible loop region spans residues 100–110 (QSADIAQGVDK). Residues 175 to 177 (DGK), 251 to 252 (KF), Asp-260, 266 to 267 (RK), Ala-283, and Lys-287 each bind ATP. Asp-260 contacts L-methionine. Lys-291 is an L-methionine binding site.

It belongs to the AdoMet synthase family. In terms of assembly, homotetramer; dimer of dimers. Mg(2+) serves as cofactor. The cofactor is K(+).

It localises to the cytoplasm. The catalysed reaction is L-methionine + ATP + H2O = S-adenosyl-L-methionine + phosphate + diphosphate. Its pathway is amino-acid biosynthesis; S-adenosyl-L-methionine biosynthesis; S-adenosyl-L-methionine from L-methionine: step 1/1. Its function is as follows. Catalyzes the formation of S-adenosylmethionine (AdoMet) from methionine and ATP. The overall synthetic reaction is composed of two sequential steps, AdoMet formation and the subsequent tripolyphosphate hydrolysis which occurs prior to release of AdoMet from the enzyme. The chain is S-adenosylmethionine synthase from Trichodesmium erythraeum (strain IMS101).